The following is a 286-amino-acid chain: Interferon-induced 35 kDa protein (286 aa).

Positions 5–26 (LDAALHALQEEQARLKMRLWDL) are leucine-zipper. NID domains lie at 81–170 (ALIT…GDVD) and 183–266 (FARD…GEVE).

It belongs to the NMI family. In terms of assembly, homodimer. Also interacts with BATF. Interacts with TRIM21. Interacts with NMI; the interaction is direct and is facilitated by TRIM21. Post-translationally, phosphorylated. Dephosphorylation correlates with the formation of a complex with NMI. In terms of tissue distribution, expressed in a wide range of cell types, including fibroblasts, macrophages, and epithelial cells.

It localises to the cytoplasm. The protein localises to the nucleus. It is found in the secreted. Acts as a signaling pathway regulator involved in innate immune system response. In response to interferon IFN-alpha, associates in a complex with signaling pathway regulator NMI to regulate immune response; the complex formation prevents proteasome-mediated degradation of IFI35 and correlates with IFI35 dephosphorylation. In complex with NMI, inhibits virus-triggered type I interferon/IFN-beta production. In complex with NMI, negatively regulates nuclear factor NF-kappa-B signaling by inhibiting the nuclear translocation, activation and transcription of the NF-kappa-B subunit p65/RELA, resulting in the inhibition of endothelial cell proliferation, migration and re-endothelialization of injured arteries. Beside its role as an intracellular signaling pathway regulator, also functions extracellularly as damage-associated molecular patterns (DAMPs) to promote inflammation when actively released by macrophage to the extracellular space during cell injury and pathogen invasion. Macrophage-secreted IFI35 activates NF-kappa-B signaling in adjacent macrophages through Toll-like receptor 4/TLR4 activation, thereby inducing NF-kappa-B translocation from the cytoplasm into the nucleus which promotes the release of pro-inflammatory cytokines. The protein is Interferon-induced 35 kDa protein of Homo sapiens (Human).